A 141-amino-acid polypeptide reads, in one-letter code: Large ribosomal subunit protein uL11 (141 aa).

This sequence belongs to the universal ribosomal protein uL11 family. In terms of assembly, part of the ribosomal stalk of the 50S ribosomal subunit. Interacts with L10 and the large rRNA to form the base of the stalk. L10 forms an elongated spine to which L12 dimers bind in a sequential fashion forming a multimeric L10(L12)X complex. Post-translationally, one or more lysine residues are methylated.

Functionally, forms part of the ribosomal stalk which helps the ribosome interact with GTP-bound translation factors. This Synechococcus sp. (strain JA-2-3B'a(2-13)) (Cyanobacteria bacterium Yellowstone B-Prime) protein is Large ribosomal subunit protein uL11.